The sequence spans 463 residues: MSNKAWGGRFETQPEEWVDDFNASIDFDKNLIKQDVQGSIAHATMLAKQHIITDDEAQSIINELKNIQSDFEEGKLKFKASLEDIHLNIEHELIQRIGEAGGKLHTGRSRNDQVATDMHLYTKEQVQYIIELIASFQETIVQLADQHVDTIMPGYTHLQRAQPISFAHHIMTYFWMLERDKGRFMDSLKRIDISPLGAAALSGTTHPIDRHLTQELLGFANLYENSLDAVSDRDYIVETLHHISLTMVHLSRFAEEIIFWSTDEAKFITLSDAFSTGSSIMPQKKNPDMAELIRGKVGRTTGHLMSMLVTLKGLPLAYNKDMQEDKEGLFDAVHTLKGSLRIFEGMVASMKVNSNRLSQTVKNDFSNATELADYLVSKSVPFRTAHEIVGKIVLNCIHKGIYLLDVPLSEYQEHHENIEEDIYDYLTPENCLKRRQSYGSTGQESVKHQLKVAKALLKDNESK.

It belongs to the lyase 1 family. Argininosuccinate lyase subfamily.

It is found in the cytoplasm. The enzyme catalyses 2-(N(omega)-L-arginino)succinate = fumarate + L-arginine. The protein operates within amino-acid biosynthesis; L-arginine biosynthesis; L-arginine from L-ornithine and carbamoyl phosphate: step 3/3. This Staphylococcus epidermidis (strain ATCC 35984 / DSM 28319 / BCRC 17069 / CCUG 31568 / BM 3577 / RP62A) protein is Argininosuccinate lyase.